A 473-amino-acid chain; its full sequence is L-seryl-tRNA(Sec) selenium transferase (473 aa).

Lys302 bears the N6-(pyridoxal phosphate)lysine mark.

This sequence belongs to the SelA family. The cofactor is pyridoxal 5'-phosphate.

The protein resides in the cytoplasm. It catalyses the reaction L-seryl-tRNA(Sec) + selenophosphate + H(+) = L-selenocysteinyl-tRNA(Sec) + phosphate. The protein operates within aminoacyl-tRNA biosynthesis; selenocysteinyl-tRNA(Sec) biosynthesis; selenocysteinyl-tRNA(Sec) from L-seryl-tRNA(Sec) (bacterial route): step 1/1. Functionally, converts seryl-tRNA(Sec) to selenocysteinyl-tRNA(Sec) required for selenoprotein biosynthesis. This Shewanella oneidensis (strain ATCC 700550 / JCM 31522 / CIP 106686 / LMG 19005 / NCIMB 14063 / MR-1) protein is L-seryl-tRNA(Sec) selenium transferase.